Here is a 216-residue protein sequence, read N- to C-terminus: Adenylate kinase (216 aa).

ATP is bound at residue 10 to 15 (GAGKGT). The segment at 30–59 (STGDMFRAAMKAETEMGLQAKSFIDKGALV) is NMP. Residues Thr31, Arg36, 57–59 (ALV), 85–88 (GFPR), and Gln92 each bind AMP. Residues 126–163 (GRRICKECGATYHLEFNPPAKADVCDKCGGELYQRSDD) are LID. ATP is bound at residue Arg127. Cys130 and Cys133 together coordinate Zn(2+). 136–137 (TY) serves as a coordination point for ATP. Residues Cys150 and Cys153 each coordinate Zn(2+). Arg160 and Arg171 together coordinate AMP. Residue Gln199 participates in ATP binding.

It belongs to the adenylate kinase family. In terms of assembly, monomer.

Its subcellular location is the cytoplasm. It catalyses the reaction AMP + ATP = 2 ADP. It functions in the pathway purine metabolism; AMP biosynthesis via salvage pathway; AMP from ADP: step 1/1. Functionally, catalyzes the reversible transfer of the terminal phosphate group between ATP and AMP. Plays an important role in cellular energy homeostasis and in adenine nucleotide metabolism. This Bacillus cereus (strain G9842) protein is Adenylate kinase.